A 447-amino-acid chain; its full sequence is Naphthalene 1,2-dioxygenase system, large oxygenase component (447 aa).

The Rieske domain maps to Trp37–Glu135. Positions 79, 81, 99, and 102 each coordinate [2Fe-2S] cluster. Fe cation contacts are provided by His206, His211, and Asp360.

It belongs to the bacterial ring-hydroxylating dioxygenase alpha subunit family. As to quaternary structure, the naphthalene dioxygenase (NDO) multicomponent enzyme system is composed of an electron transfer component and a dioxygenase component (iron sulfur protein (ISP)). The electron transfer component is composed of a ferredoxin reductase (NagAa) and a ferredoxin (NagAb), and the dioxygenase component is formed by a large alpha subunit (NagAc) and a small beta subunit (NagAd). It depends on [2Fe-2S] cluster as a cofactor. Fe(2+) serves as cofactor.

It catalyses the reaction naphthalene + NADH + O2 + H(+) = (1R,2S)-1,2-dihydronaphthalene-1,2-diol + NAD(+). It functions in the pathway aromatic compound metabolism; naphthalene degradation. Component of the naphthalene dioxygenase (NDO) multicomponent enzyme system which catalyzes the incorporation of both atoms of molecular oxygen into naphthalene to form cis-(1R,2S)-dihydroxy-1,2-dihydronaphthalene. The alpha subunit has a catalytic role in the holoenzyme. Also able to use styrene as substrate. This chain is Naphthalene 1,2-dioxygenase system, large oxygenase component, found in Ralstonia sp.